The sequence spans 174 residues: Chromophore lyase CpcS/CpeS 1 (174 aa).

The protein belongs to the CpcS/CpeS biliprotein lyase family.

Covalently attaches a chromophore to Cys residue(s) of phycobiliproteins. This is Chromophore lyase CpcS/CpeS 1 from Trichodesmium erythraeum (strain IMS101).